A 248-amino-acid chain; its full sequence is D-xylose 1-dehydrogenase (248 aa).

NAD(+) contacts are provided by Asp-42, Asp-68, Asn-91, Tyr-156, Lys-160, Val-189, and Thr-191. Tyr-156 serves as the catalytic Proton acceptor.

It belongs to the short-chain dehydrogenases/reductases (SDR) family.

It carries out the reaction D-xylose + NAD(+) = D-xylono-1,5-lactone + NADH + H(+). Its function is as follows. Involved in the degradation of D-xylose. Catalyzes the initial reaction in the xylose utilization pathway by oxydizing D-xylose into D-xylonolactone. Shows some activity with L-arabinose and D-lyxose, but D-xylose is clearly the best substrate. Has no activity with D-ribose, D-glucose, D-galactose or D-mannose. In Caulobacter vibrioides (strain ATCC 19089 / CIP 103742 / CB 15) (Caulobacter crescentus), this protein is D-xylose 1-dehydrogenase.